The primary structure comprises 436 residues: Gamma-glutamyl phosphate reductase (436 aa).

This sequence belongs to the gamma-glutamyl phosphate reductase family.

It is found in the cytoplasm. The catalysed reaction is L-glutamate 5-semialdehyde + phosphate + NADP(+) = L-glutamyl 5-phosphate + NADPH + H(+). The protein operates within amino-acid biosynthesis; L-proline biosynthesis; L-glutamate 5-semialdehyde from L-glutamate: step 2/2. Catalyzes the NADPH-dependent reduction of L-glutamate 5-phosphate into L-glutamate 5-semialdehyde and phosphate. The product spontaneously undergoes cyclization to form 1-pyrroline-5-carboxylate. In Polaromonas sp. (strain JS666 / ATCC BAA-500), this protein is Gamma-glutamyl phosphate reductase.